The sequence spans 218 residues: Enhancer of split M2 protein (218 aa).

Over residues 1 to 25 (MYLDTKNLTASSTSALTAATASNSK) the composition is skewed to low complexity. 3 disordered regions span residues 1 to 30 (MYLD…TRRM), 64 to 86 (NTQQ…KSTP), and 137 to 164 (GRNC…SSSA). Low complexity predominate over residues 147–163 (SSNINSSSSSSNMNSSS).

Functionally, part of the Notch signaling pathway. The sequence is that of Enhancer of split M2 protein from Drosophila melanogaster (Fruit fly).